The sequence spans 731 residues: EF-hand calcium-binding domain-containing protein 4B (731 aa).

The tract at residues 1–45 is disordered; the sequence is MAAPDGRVVSRPQRLGQGSGQGPKGSGACLHPLDSLEQKETQEQT. The EF-hand domain maps to 84-119; the sequence is LSLEELEDVFDALDADGNGYLTPQEFTTGFSHFFFS. The Ca(2+) site is built by D97, D99, N101, Y103, and E108. Residues 201 to 382 are a coiled coil; it reads LTRIISQLQE…RERNKHLRDE (182 aa). A proline-rich domain (PRD) which mediates interaction with VAV1 region spans residues 349 to 540; it reads MEVYRVTESL…ALCKEESSPS (192 aa). 2 disordered regions span residues 426–466 and 494–528; these read SEEE…PYPR and CSEE…QPVG. Positions 554, 556, 557, 558, 559, 560, 571, 572, and 577 each coordinate GTP. Residue T559 participates in Mg(2+) binding. Residues 572–580 are switch-I; that stretch reads PGMAATVGI. Positions 577 and 600 each coordinate Mg(2+). Residues G603, N658, K659, D661, and A689 each coordinate GTP. Residues 603–619 are switch-II; that stretch reads GQERYRCITQQFFRKAD. C729 carries S-geranylgeranyl cysteine lipidation.

This sequence belongs to the EFCAB4 family. As to quaternary structure, interacts with ORAI1 and STIM1; the interaction is direct and takes place in absence of Ca(2+). Forms a complex with ORAI1 and STIM1 at low concentration of Ca(2+), the complex dissociates at elevated Ca(2+) concentrations. Interacts with ORAI2 and ORAI3. In terms of assembly, interacts with DYNC1H1. Interacts with the dynein-dynactin complex in a Ca(2+)-dependent manner. Interacts with VAV1. Mg(2+) is required as a cofactor. In terms of tissue distribution, expressed in the Jurkat T-cell line. As to expression, expressed in endothelial cells. Expressed in Weibel-Palade bodies (which are P-selectin/SELP negative) in endothelial cells. Expressed in the Jurkat T-cell line.

It localises to the cytoplasm. Its subcellular location is the cytoskeleton. The protein localises to the microtubule organizing center. The protein resides in the cell membrane. It is found in the golgi apparatus membrane. It localises to the golgi apparatus. Its subcellular location is the trans-Golgi network membrane. The protein localises to the vesicle. The catalysed reaction is GTP + H2O = GDP + phosphate + H(+). In terms of biological role, ca(2+)-binding protein that plays a key role in store-operated Ca(2+) entry (SOCE) in T-cells by regulating CRAC channel activation. Acts as a cytoplasmic calcium-sensor that facilitates the clustering of ORAI1 and STIM1 at the junctional regions between the plasma membrane and the endoplasmic reticulum upon low Ca(2+) concentration. It thereby regulates CRAC channel activation, including translocation and clustering of ORAI1 and STIM1. Upon increase of cytoplasmic Ca(2+) resulting from opening of CRAC channels, dissociates from ORAI1 and STIM1, thereby destabilizing the ORAI1-STIM1 complex. Functionally, rab GTPase that mediates the trafficking of Weibel-Palade bodies (WPBs) to microtubule organizing center (MTOC) in endothelial cells in response to acute inflammatory stimuli. During histamine (but not thrombin) stimulation of endothelial cells, the dynein-bound form induces retrograde transport of a subset of WPBs along microtubules to the MTOC in a Ca(2+)-independent manner and its GTPase activity is essential for this function. Ca(2+)-regulated dynein adapter protein that activates dynein-mediated transport and dynein-dynactin motility on microtubules and regulates endosomal trafficking of CD47. Acts as an intracellular signaling module bridging two important T-cell receptor (TCR) signaling pathways, Ca(2+)-NFAT and JNK, to affect T-cell activation. In resting T-cells, is predominantly localized near TGN network in a GTP-bound form, upon TCR stimulation, localizes at the immunological synapse via interaction with VAV1 to activate downstream Ca(2+)-NFAT and JNK signaling pathways. Plays a role in T-helper 1 (Th1) cell differentiation and T-helper 17 (Th17) cell effector function. Plays a role in store-operated Ca(2+) entry (SOCE) in T-cells by regulating CRAC channel activation. The chain is EF-hand calcium-binding domain-containing protein 4B from Homo sapiens (Human).